Reading from the N-terminus, the 544-residue chain is NXPE family member 4 (544 aa).

The signal sequence occupies residues 1 to 27 (MKISMINYKSLLALLFILASWIIFTVF). N-linked (GlcNAc...) asparagine glycosylation is found at N29, N38, N47, N48, N92, N160, and N210.

The protein belongs to the NXPE family.

The protein localises to the secreted. The protein is NXPE family member 4 (NXPE4) of Homo sapiens (Human).